Consider the following 155-residue polypeptide: SsrA-binding protein (155 aa).

It belongs to the SmpB family.

The protein localises to the cytoplasm. Functionally, required for rescue of stalled ribosomes mediated by trans-translation. Binds to transfer-messenger RNA (tmRNA), required for stable association of tmRNA with ribosomes. tmRNA and SmpB together mimic tRNA shape, replacing the anticodon stem-loop with SmpB. tmRNA is encoded by the ssrA gene; the 2 termini fold to resemble tRNA(Ala) and it encodes a 'tag peptide', a short internal open reading frame. During trans-translation Ala-aminoacylated tmRNA acts like a tRNA, entering the A-site of stalled ribosomes, displacing the stalled mRNA. The ribosome then switches to translate the ORF on the tmRNA; the nascent peptide is terminated with the 'tag peptide' encoded by the tmRNA and targeted for degradation. The ribosome is freed to recommence translation, which seems to be the essential function of trans-translation. The chain is SsrA-binding protein from Bacillus cytotoxicus (strain DSM 22905 / CIP 110041 / 391-98 / NVH 391-98).